Consider the following 349-residue polypeptide: Phenylalanine--tRNA ligase alpha subunit (349 aa).

Glutamate 261 is a Mg(2+) binding site.

Belongs to the class-II aminoacyl-tRNA synthetase family. Phe-tRNA synthetase alpha subunit type 1 subfamily. In terms of assembly, tetramer of two alpha and two beta subunits. Requires Mg(2+) as cofactor.

The protein localises to the cytoplasm. It catalyses the reaction tRNA(Phe) + L-phenylalanine + ATP = L-phenylalanyl-tRNA(Phe) + AMP + diphosphate + H(+). The chain is Phenylalanine--tRNA ligase alpha subunit from Leuconostoc citreum (strain KM20).